The chain runs to 496 residues: MWQIIFLTFGWDLVLASAYSNFRKSVDSTGRRQYQVQNGPCSYTFLLPETDSCRSSSSPYMSNAVQRDAPLDYDDSVQRLQVLENILENNTQWLMKLENYIQDNMKKEMVEIQQNVVQNQTAVMIEIGTSLLNQTAAQTRKLTDVEAQVLNQTTRLELQLLQHSISTNKLEKQILDQTSEINKLQNKNSFLEQKVLDMEGKHSEQLQSMKEQKDELQVLVSKQSSVIDELEKKLVTATVNNSLLQKQQHDLMETVNSLLTMMSSPNSKSSVAIRKEEQTTFRDCAEIFKSGLTTSGIYTLTFPNSTEEIKAYCDMDVGGGGWTVIQHREDGSVDFQRTWKEYKEGFGSPLGEYWLGNEFVSQLTGQHRYVLKIQLKDWEGNEAHSLYDHFYLAGEESNYRIHLTGLTGTAGKISSISQPGSDFSTKDSDNDKCICKCSQMLSGGWWFDACGPSNLNGQYYPQKQNTNKFNGIKWYYWKGSGYSLKATTMMIRPADF.

The first 18 residues, 1–18 (MWQIIFLTFGWDLVLASA), serve as a signal peptide directing secretion. Residues asparagine 89, asparagine 119, asparagine 133, asparagine 151, asparagine 240, and asparagine 304 are each glycosylated (N-linked (GlcNAc...) asparagine). Positions 159–256 (QLLQHSISTN…QQHDLMETVN (98 aa)) form a coiled coil. Positions 275 to 495 (KEEQTTFRDC…ATTMMIRPAD (221 aa)) constitute a Fibrinogen C-terminal domain. An intrachain disulfide couples cysteine 284 to cysteine 313. 4 residues coordinate Ca(2+): aspartate 429, aspartate 431, cysteine 433, and cysteine 435. 2 disulfide bridges follow: cysteine 433/cysteine 435 and cysteine 437/cysteine 450.

In terms of assembly, interacts with TEK/TIE2, competing for the same binding site as ANGPT1. Interacts with ITGA5. Interacts with SVEP1/polydom. Interacts with THBD; this interaction significantly inhibits the generation of activated PC and TAFIa/CPB2 by the thrombin/thrombomodulin complex. As to expression, expressed in the ovary, uterus and placenta.

It localises to the secreted. Functionally, binds to TEK/TIE2, competing for the ANGPT1 binding site, and modulating ANGPT1 signaling. Can induce tyrosine phosphorylation of TEK/TIE2 in the absence of ANGPT1. In the absence of angiogenic inducers, such as VEGF, ANGPT2-mediated loosening of cell-matrix contacts may induce endothelial cell apoptosis with consequent vascular regression. In concert with VEGF, it may facilitate endothelial cell migration and proliferation, thus serving as a permissive angiogenic signal. Involved in the regulation of lymphangiogenesis. In Mus musculus (Mouse), this protein is Angiopoietin-2 (Angpt2).